Reading from the N-terminus, the 274-residue chain is Pre-rRNA-processing protein PNO1 (274 aa).

Positions 1–70 are disordered; it reads MVAPTALKKA…GSRKTHESKT (70 aa). The span at 33 to 48 shows a compositional bias: acidic residues; the sequence is SIDEDDDDDVLLDDSD. S47 carries the phosphoserine modification. T51 is modified (phosphothreonine). The segment covering 51–69 has biased composition (basic and acidic residues); it reads TAKEEVEGEEGSRKTHESK. The KH domain occupies 195 to 247; it reads GDHLSRAIGRIAGKDGKTKFAIENATRTRIVLADSKIHILGGFTHIRMARESV.

It belongs to the PNO1 family. In terms of assembly, component of the small ribosomal subunit, ribosomal RNA processing complex (SSU RRP complex). Interacts with NOB1.

The protein resides in the cytoplasm. The protein localises to the nucleus. Its subcellular location is the nucleolus. Required for small ribosomal subunit (SSU) synthesis. Has a role in the processing of early nucleolar and late cytoplasmic pre-RNA species. Recruits DIM1 to nucleolar pre-RNAs. Indirectly required for cleavage at the A2 site of the 20S pre-rRNA, forming 18S rRNA, and at A1 and A2 sites of other pre-rRNAs. The chain is Pre-rRNA-processing protein PNO1 (PNO1) from Saccharomyces cerevisiae (strain ATCC 204508 / S288c) (Baker's yeast).